Consider the following 485-residue polypeptide: Rhamnulokinase (485 aa).

8–12 contacts ATP; sequence ASSGR. Substrate contacts are provided by residues G78 and 231–233; that span reads HDT. D232 acts as the Proton acceptor in catalysis. T254 lines the ATP pocket. N291 is a substrate binding site. Q299 contributes to the ATP binding site. The cysteines at positions 348 and 365 are disulfide-linked. G397 is an ATP binding site. A disulfide bond links C408 and C412.

This sequence belongs to the rhamnulokinase family. Mg(2+) serves as cofactor.

The enzyme catalyses L-rhamnulose + ATP = L-rhamnulose 1-phosphate + ADP + H(+). The protein operates within carbohydrate degradation; L-rhamnose degradation; glycerone phosphate from L-rhamnose: step 2/3. In terms of biological role, involved in the catabolism of L-rhamnose (6-deoxy-L-mannose). Catalyzes the transfer of the gamma-phosphate group from ATP to the 1-hydroxyl group of L-rhamnulose to yield L-rhamnulose 1-phosphate. This Yersinia pestis bv. Antiqua (strain Angola) protein is Rhamnulokinase.